Here is a 55-residue protein sequence, read N- to C-terminus: uncharacterized protein (55 aa).

This is an uncharacterized protein from Thermoproteus tenax (TTV1).